We begin with the raw amino-acid sequence, 91 residues long: ATP synthase subunit c 1 (91 aa).

A run of 2 helical transmembrane segments spans residues 4–24 (FTMC…GTAI) and 53–73 (IGLA…LIIL).

Belongs to the ATPase C chain family. As to quaternary structure, F-type ATPases have 2 components, F(1) - the catalytic core - and F(0) - the membrane proton channel. F(1) has five subunits: alpha(3), beta(3), gamma(1), delta(1), epsilon(1). F(0) has three main subunits: a(1), b(2) and c(10-14). The alpha and beta chains form an alternating ring which encloses part of the gamma chain. F(1) is attached to F(0) by a central stalk formed by the gamma and epsilon chains, while a peripheral stalk is formed by the delta and b chains.

It localises to the cell inner membrane. In terms of biological role, f(1)F(0) ATP synthase produces ATP from ADP in the presence of a proton or sodium gradient. F-type ATPases consist of two structural domains, F(1) containing the extramembraneous catalytic core and F(0) containing the membrane proton channel, linked together by a central stalk and a peripheral stalk. During catalysis, ATP synthesis in the catalytic domain of F(1) is coupled via a rotary mechanism of the central stalk subunits to proton translocation. Functionally, key component of the F(0) channel; it plays a direct role in translocation across the membrane. A homomeric c-ring of between 10-14 subunits forms the central stalk rotor element with the F(1) delta and epsilon subunits. The sequence is that of ATP synthase subunit c 1 from Pelobacter propionicus (strain DSM 2379 / NBRC 103807 / OttBd1).